A 140-amino-acid chain; its full sequence is Large ribosomal subunit protein bL17 (140 aa).

It belongs to the bacterial ribosomal protein bL17 family. As to quaternary structure, part of the 50S ribosomal subunit. Contacts protein L32.

The sequence is that of Large ribosomal subunit protein bL17 from Rhizorhabdus wittichii (strain DSM 6014 / CCUG 31198 / JCM 15750 / NBRC 105917 / EY 4224 / RW1) (Sphingomonas wittichii).